We begin with the raw amino-acid sequence, 389 residues long: Homoserine O-acetyltransferase (389 aa).

Positions 63–371 (NAVLVLHALT…SSDYGHDGFL (309 aa)) constitute an AB hydrolase-1 domain. S168 acts as the Nucleophile in catalysis. R240 contributes to the substrate binding site. Residues D334 and H367 contribute to the active site. D368 provides a ligand contact to substrate.

It belongs to the AB hydrolase superfamily. MetX family. As to quaternary structure, homodimer.

Its subcellular location is the cytoplasm. It carries out the reaction L-homoserine + acetyl-CoA = O-acetyl-L-homoserine + CoA. It participates in amino-acid biosynthesis; L-methionine biosynthesis via de novo pathway; O-acetyl-L-homoserine from L-homoserine: step 1/1. In terms of biological role, transfers an acetyl group from acetyl-CoA to L-homoserine, forming acetyl-L-homoserine. The chain is Homoserine O-acetyltransferase from Clavibacter michiganensis subsp. michiganensis (strain NCPPB 382).